Here is a 221-residue protein sequence, read N- to C-terminus: Thiamine-phosphate synthase (221 aa).

4-amino-2-methyl-5-(diphosphooxymethyl)pyrimidine is bound by residues 44 to 48 (QFREK) and Asn-79. Residues Asp-80 and Asp-99 each coordinate Mg(2+). Ser-117 is a 4-amino-2-methyl-5-(diphosphooxymethyl)pyrimidine binding site. 143–145 (TSS) contributes to the 2-[(2R,5Z)-2-carboxy-4-methylthiazol-5(2H)-ylidene]ethyl phosphate binding site. Lys-146 lines the 4-amino-2-methyl-5-(diphosphooxymethyl)pyrimidine pocket. 2-[(2R,5Z)-2-carboxy-4-methylthiazol-5(2H)-ylidene]ethyl phosphate is bound by residues Gly-175 and 195–196 (IS).

It belongs to the thiamine-phosphate synthase family. Mg(2+) serves as cofactor.

The enzyme catalyses 2-[(2R,5Z)-2-carboxy-4-methylthiazol-5(2H)-ylidene]ethyl phosphate + 4-amino-2-methyl-5-(diphosphooxymethyl)pyrimidine + 2 H(+) = thiamine phosphate + CO2 + diphosphate. It catalyses the reaction 2-(2-carboxy-4-methylthiazol-5-yl)ethyl phosphate + 4-amino-2-methyl-5-(diphosphooxymethyl)pyrimidine + 2 H(+) = thiamine phosphate + CO2 + diphosphate. The catalysed reaction is 4-methyl-5-(2-phosphooxyethyl)-thiazole + 4-amino-2-methyl-5-(diphosphooxymethyl)pyrimidine + H(+) = thiamine phosphate + diphosphate. It functions in the pathway cofactor biosynthesis; thiamine diphosphate biosynthesis; thiamine phosphate from 4-amino-2-methyl-5-diphosphomethylpyrimidine and 4-methyl-5-(2-phosphoethyl)-thiazole: step 1/1. In terms of biological role, condenses 4-methyl-5-(beta-hydroxyethyl)thiazole monophosphate (THZ-P) and 2-methyl-4-amino-5-hydroxymethyl pyrimidine pyrophosphate (HMP-PP) to form thiamine monophosphate (TMP). This is Thiamine-phosphate synthase from Geobacillus kaustophilus (strain HTA426).